We begin with the raw amino-acid sequence, 309 residues long: tRNA dimethylallyltransferase (309 aa).

Residue 10–17 (GPTASGKT) participates in ATP binding. Position 12–17 (12–17 (TASGKT)) interacts with substrate. Interaction with substrate tRNA regions lie at residues 35–38 (DSAL) and 240–245 (RCVGYR).

This sequence belongs to the IPP transferase family. Monomer. Mg(2+) serves as cofactor.

The enzyme catalyses adenosine(37) in tRNA + dimethylallyl diphosphate = N(6)-dimethylallyladenosine(37) in tRNA + diphosphate. Its function is as follows. Catalyzes the transfer of a dimethylallyl group onto the adenine at position 37 in tRNAs that read codons beginning with uridine, leading to the formation of N6-(dimethylallyl)adenosine (i(6)A). The protein is tRNA dimethylallyltransferase of Baumannia cicadellinicola subsp. Homalodisca coagulata.